A 376-amino-acid chain; its full sequence is 26S proteasome non-ATPase regulatory subunit 13 (376 aa).

The 168-residue stretch at 171-338 folds into the PCI domain; that stretch reads SYYKDALRFL…KRVHMTWVQP (168 aa).

Component of the 19S proteasome regulatory particle complex. The 26S proteasome consists of a 20S core particle (CP) and two 19S regulatory subunits (RP). The regulatory particle is made of a lid composed of 9 subunits including PSMD13, a base containing 6 ATPases and few additional components.

Its function is as follows. Component of the 26S proteasome, a multiprotein complex involved in the ATP-dependent degradation of ubiquitinated proteins. This complex plays a key role in the maintenance of protein homeostasis by removing misfolded or damaged proteins, which could impair cellular functions, and by removing proteins whose functions are no longer required. Therefore, the proteasome participates in numerous cellular processes, including cell cycle progression, apoptosis, or DNA damage repair. This chain is 26S proteasome non-ATPase regulatory subunit 13, found in Gallus gallus (Chicken).